Here is a 380-residue protein sequence, read N- to C-terminus: GTP-binding protein 10 (380 aa).

Residues 13–148 (GNFVDNVRLY…RNIRLDLKLI (136 aa)) form the Obg domain. The OBG-type G domain occupies 149-344 (ADFGLVGFPN…LKSLIRQSLE (196 aa)). Residues 155-162 (GFPNAGKS), 202-206 (DLPGL), and 278-281 (NKMD) each bind GTP.

Belongs to the TRAFAC class OBG-HflX-like GTPase superfamily. OBG GTPase family.

It localises to the nucleus. The protein resides in the nucleolus. In terms of biological role, may be involved in the ribosome maturation process. This is GTP-binding protein 10 (gtpbp10) from Danio rerio (Zebrafish).